We begin with the raw amino-acid sequence, 59 residues long: Large ribosomal subunit protein bL32 (59 aa).

This sequence belongs to the bacterial ribosomal protein bL32 family.

The sequence is that of Large ribosomal subunit protein bL32 from Thermodesulfovibrio yellowstonii (strain ATCC 51303 / DSM 11347 / YP87).